Here is a 506-residue protein sequence, read N- to C-terminus: DNA polymerase type-X family protein pol4 (506 aa).

One can recognise a BRCT domain in the interval 1-98 (MKILASSTNY…TPGNPYVIWH (98 aa)). The segment at 106 to 150 (GSPYTPSTRPASHTEAPNDFENHETPNTENNNEVKSIDNVDQEGS) is disordered. The segment at 348–357 (RGKPVGADVD) is involved in ssDNA binding. Asp-355, Asp-357, and Asp-419 together coordinate Mg(2+).

Belongs to the DNA polymerase type-X family. The cofactor is Mg(2+).

The protein resides in the cytoplasm. It is found in the nucleus. It carries out the reaction DNA(n) + a 2'-deoxyribonucleoside 5'-triphosphate = DNA(n+1) + diphosphate. Its function is as follows. Repair polymerase. Involved in gap-filling in DNA non-homologous end joining (NHEJ) required for double-strand break repair. Can incorporate a ribonucleotide (rNTP) into a primer DNA. This is DNA polymerase type-X family protein pol4 (pol4) from Schizosaccharomyces pombe (strain 972 / ATCC 24843) (Fission yeast).